A 119-amino-acid chain; its full sequence is Ribonuclease pancreatic (119 aa).

Position 1 is a pyrrolidone carboxylic acid (Gln-1). His-10 functions as the Proton acceptor in the catalytic mechanism. Intrachain disulfides connect Cys-25–Cys-80, Cys-39–Cys-91, and Cys-57–Cys-106. 40-44 (KTRNT) contacts substrate. The active-site Proton donor is the His-113.

It belongs to the pancreatic ribonuclease family. Monomer. Interacts with and forms tight 1:1 complexes with RNH1. Dimerization of two such complexes may occur. Interaction with RNH1 inhibits this protein. As to expression, pancreas.

The protein resides in the secreted. It catalyses the reaction an [RNA] containing cytidine + H2O = an [RNA]-3'-cytidine-3'-phosphate + a 5'-hydroxy-ribonucleotide-3'-[RNA].. The enzyme catalyses an [RNA] containing uridine + H2O = an [RNA]-3'-uridine-3'-phosphate + a 5'-hydroxy-ribonucleotide-3'-[RNA].. Functionally, endonuclease that catalyzes the cleavage of RNA on the 3' side of pyrimidine nucleotides. Acts on single-stranded and double-stranded RNA. The chain is Ribonuclease pancreatic from Iguana iguana (Common iguana).